The primary structure comprises 459 residues: Antizyme inhibitor 2 (459 aa).

Positions 117–140 (QVAQIKYAAKHGVRLLSFDNEVEL) are necessary for polyamine uptake stimulation.

The protein belongs to the Orn/Lys/Arg decarboxylase class-II family. ODC antizyme inhibitor subfamily. Monomer. Interacts with OAZ1, OAZ2 and OAZ3; this interaction disrupts the interaction between the antizyme and ODC1. Does not form a heterodimer with ODC1. Ubiquitinated, leading to its proteasomal degradation; a process that is reduced in presence of antizymes. May also be degraded through the lysosomal degradative pathway in a proteasomal-independent manner. Expressed in the medulla and chromaffin cells of the adrenal gland. Expressed in the Langerhans islets of the pancreas. Expressed in the inner part of the seminiferous tubules and in spermatozoa located in the lumen of the epididymis of the testis. Expressed in the cortex, hippocampus and cerebellum of the brain. Expressed in normal and neoplastic mast cells (MC) (at protein level). Expressed in testis, pancreas and brain. Expressed throughout the differentiation process from spermatids to spermatozoa in the inner part of the seminiferous tubules. Expressed in the kidney: expressed in the superficial (Cs) and the deep layer (Cd) of the cortex region and in the outer stripe (OS), inner stripe (IS) and the inner medulla papilla (IM) of the medulla region.

The protein resides in the nucleus. It is found in the cytoplasm. The protein localises to the perinuclear region. It localises to the membrane. Its subcellular location is the cytoplasmic vesicle. The protein resides in the endoplasmic reticulum-Golgi intermediate compartment. It is found in the golgi apparatus. The protein localises to the cis-Golgi network. It localises to the trans-Golgi network. Its subcellular location is the cytoplasmic granule. The protein resides in the cell projection. It is found in the axon. The protein localises to the dendrite. It localises to the perikaryon. Its function is as follows. Antizyme inhibitor (AZI) protein that positively regulates ornithine decarboxylase (ODC) activity and polyamine uptake. AZI is an enzymatically inactive ODC homolog that counteracts the negative effect of ODC antizymes (AZs) OAZ1, OAZ2 and OAZ3 on ODC activity by competing with ODC for antizyme-binding. Inhibits antizyme-dependent ODC degradation and releases ODC monomers from their inactive complex with antizymes, leading to formation of the catalytically active ODC homodimer and restoring polyamine production. Participates in the morphological integrity of the trans-Golgi network (TGN) and functions as a regulator of intracellular secretory vesicle trafficking. This is Antizyme inhibitor 2 (Azin2) from Mus musculus (Mouse).